A 1975-amino-acid polypeptide reads, in one-letter code: Golgi-specific brefeldin A-resistance guanine nucleotide exchange factor 1 homolog (1975 aa).

Disordered stretches follow at residues 216–243 (NPTE…EPEN) and 299–352 (ISAG…EEKM). The span at 221-230 (RQKRKKKRQL) shows a compositional bias: basic residues. Positions 624–812 (QIIEQKKRKR…ADMYQAIKTE (189 aa)) constitute an SEC7 domain. Residues 1264 to 1277 (QSLRVGGDQQQQRM) show a composition bias toward polar residues. 5 disordered regions span residues 1264 to 1318 (QSLR…DLES), 1447 to 1473 (DEKA…VTED), 1699 to 1751 (IKDT…ATAQ), 1788 to 1854 (VHSG…QYAY), and 1877 to 1975 (YANQ…QEKP). A compositionally biased stretch (basic and acidic residues) spans 1291-1309 (GAHEERAYTSEGEERRRGG). Residues 1451–1464 (VKKHHHHHHGHKKK) show a composition bias toward basic residues. The segment covering 1734 to 1751 (SNSTAATSTSDPSIATAQ) has biased composition (low complexity). Positions 1797 to 1808 (GSPPQTEPPASS) are enriched in pro residues. Low complexity-rich tracts occupy residues 1820–1854 (YEQY…QYAY) and 1877–1894 (YANQ…QQQH). Positions 1895–1909 (PVNPTSPSVHGQYSV) are enriched in polar residues. The span at 1938 to 1957 (TPPQNNAPALAPSAPTTTSA) shows a compositional bias: low complexity.

Its subcellular location is the golgi apparatus. The protein localises to the cis-Golgi network. It localises to the endoplasmic reticulum-Golgi intermediate compartment. Guanine-nucleotide exchange factor (GEF) for members of the Arf family of small GTPases involved in trafficking in the early secretory pathway; its GEF activity initiates the coating of nascent vesicles via the localized generation of activated ARFs through replacement of GDP with GTP. Also, plays a role in receptor-mediated endocytosis in oocytes and endosomal trafficking. Involved in vesicle retrograde transport from the ERGIC and cis-Golgi compartments to the endoplasmic reticulum (ER). Plays a role in maintaining mitochondrial morphology, network organization and function. May be required for the basolateral cell membrane localization of the serine threonine protein kinase sgk-1 in intestinal cells. The protein is Golgi-specific brefeldin A-resistance guanine nucleotide exchange factor 1 homolog of Caenorhabditis elegans.